A 69-amino-acid polypeptide reads, in one-letter code: Sec-independent protein translocase protein TatA (69 aa).

Residues 1-21 (MFGLGGQELILILMIILLLFG) form a helical membrane-spanning segment. The interval 49–69 (EFNKAMDDETPKKKDFGPDRE) is disordered.

This sequence belongs to the TatA/E family. Forms a complex with TatC.

It localises to the cell inner membrane. Its function is as follows. Part of the twin-arginine translocation (Tat) system that transports large folded proteins containing a characteristic twin-arginine motif in their signal peptide across membranes. TatA could form the protein-conducting channel of the Tat system. The chain is Sec-independent protein translocase protein TatA from Chlorobium luteolum (strain DSM 273 / BCRC 81028 / 2530) (Pelodictyon luteolum).